The primary structure comprises 942 residues: Homeobox transcription factor phx1 (942 aa).

Polar residues-rich tracts occupy residues 1–19 (MRSYSNPENGGQINDNINY), 61–73 (HLQGEQQNPTNPN), 99–116 (ADNNSFDNVNSSKLTNPS), and 122–135 (IVKSESEPANSKQN). 5 disordered regions span residues 1–54 (MRSY…MQLP), 61–80 (HLQGEQQNPTNPNYFPPEFD), 87–172 (KQEK…KKQR), 604–651 (WANQ…STST), and 892–922 (SSSGGVYASQPGASGYLSHDQSGSPFEDVYS). Basic and acidic residues predominate over residues 142-151 (SVEKAKENVA). Positions 153 to 164 (ESGTPESGGSTS) are enriched in low complexity. Positions 164-224 (SAPKSKKQRL…QNRRAKSKLI (61 aa)) form a DNA-binding region, homeobox. Composition is skewed to polar residues over residues 604-614 (WANQLPRQPDS) and 630-641 (SHDTSSEYGNKS).

The protein localises to the nucleus. Its function is as follows. Trnascription factor that regulates the expression of the homocitrate synthase (HCS) lys4. The polypeptide is Homeobox transcription factor phx1 (phx1) (Schizosaccharomyces pombe (strain 972 / ATCC 24843) (Fission yeast)).